Reading from the N-terminus, the 214-residue chain is Probable transaldolase (214 aa).

Catalysis depends on lysine 83, which acts as the Schiff-base intermediate with substrate.

Belongs to the transaldolase family. Type 3B subfamily.

It localises to the cytoplasm. The catalysed reaction is D-sedoheptulose 7-phosphate + D-glyceraldehyde 3-phosphate = D-erythrose 4-phosphate + beta-D-fructose 6-phosphate. It participates in carbohydrate degradation; pentose phosphate pathway; D-glyceraldehyde 3-phosphate and beta-D-fructose 6-phosphate from D-ribose 5-phosphate and D-xylulose 5-phosphate (non-oxidative stage): step 2/3. Functionally, transaldolase is important for the balance of metabolites in the pentose-phosphate pathway. The protein is Probable transaldolase of Geobacter sulfurreducens (strain ATCC 51573 / DSM 12127 / PCA).